The chain runs to 204 residues: Outer-membrane lipoprotein LolB (204 aa).

An N-terminal signal peptide occupies residues 1–16 (MLRHLLVFSLIALLAG). The N-palmitoyl cysteine moiety is linked to residue C17. Residue C17 is the site of S-diacylglycerol cysteine attachment.

Belongs to the LolB family. As to quaternary structure, monomer.

Its subcellular location is the cell outer membrane. Functionally, plays a critical role in the incorporation of lipoproteins in the outer membrane after they are released by the LolA protein. In Ectopseudomonas mendocina (strain ymp) (Pseudomonas mendocina), this protein is Outer-membrane lipoprotein LolB.